Consider the following 311-residue polypeptide: Transcription initiation factor IIB (311 aa).

The TFIIB-type zinc-finger motif lies at 11–42; the sequence is KETKCPECGSTKLINDHERGEVVCGACGLVID. Residues Cys15, Cys18, Cys34, and Cys37 each coordinate Zn(2+). 2 consecutive repeat copies span residues 128-211 and 222-303.

This sequence belongs to the TFIIB family.

Functionally, stabilizes TBP binding to an archaeal box-A promoter. Also responsible for recruiting RNA polymerase II to the pre-initiation complex (DNA-TBP-TFIIB). In Methanosphaera stadtmanae (strain ATCC 43021 / DSM 3091 / JCM 11832 / MCB-3), this protein is Transcription initiation factor IIB.